The following is a 245-amino-acid chain: Ribonuclease 3 (245 aa).

Positions 19 to 148 constitute an RNase III domain; the sequence is FKVFQEKIGI…FIGALYLDQG (130 aa). E61 serves as a coordination point for Mg(2+). D65 is a catalytic residue. Residues D134 and E137 each contribute to the Mg(2+) site. E137 is an active-site residue. One can recognise a DRBM domain in the interval 174 to 243; the sequence is DYKSQLQELI…AAEALKKLKE (70 aa).

It belongs to the ribonuclease III family. Homodimer. It depends on Mg(2+) as a cofactor.

It is found in the cytoplasm. The catalysed reaction is Endonucleolytic cleavage to 5'-phosphomonoester.. Its function is as follows. Digests double-stranded RNA. Involved in the processing of primary rRNA transcript to yield the immediate precursors to the large and small rRNAs (23S and 16S). Processes some mRNAs, and tRNAs when they are encoded in the rRNA operon. Processes pre-crRNA and tracrRNA of type II CRISPR loci if present in the organism. This is Ribonuclease 3 from Bacillus cereus (strain ZK / E33L).